The chain runs to 209 residues: Kynurenine formamidase (209 aa).

Position 18 (Phe18) interacts with substrate. His48, His52, and Asp54 together coordinate Zn(2+). The Proton donor/acceptor role is filled by His58. 2 residues coordinate Zn(2+): His160 and Glu172.

The protein belongs to the Cyclase 1 superfamily. KynB family. Homodimer. Requires Zn(2+) as cofactor.

It carries out the reaction N-formyl-L-kynurenine + H2O = L-kynurenine + formate + H(+). It participates in amino-acid degradation; L-tryptophan degradation via kynurenine pathway; L-kynurenine from L-tryptophan: step 2/2. In terms of biological role, catalyzes the hydrolysis of N-formyl-L-kynurenine to L-kynurenine, the second step in the kynurenine pathway of tryptophan degradation. The polypeptide is Kynurenine formamidase (Bordetella petrii (strain ATCC BAA-461 / DSM 12804 / CCUG 43448)).